Consider the following 362-residue polypeptide: 3-isopropylmalate dehydrogenase (362 aa).

Position 78–91 (78–91 (GPKWESLPPDEQPE)) interacts with NAD(+). Positions 99, 109, 138, and 227 each coordinate substrate. The Mg(2+) site is built by Asp227, Asp251, and Asp255. 285–297 (GSAPDIAGQGIAN) is an NAD(+) binding site.

The protein belongs to the isocitrate and isopropylmalate dehydrogenases family. LeuB type 1 subfamily. In terms of assembly, homodimer. Mg(2+) is required as a cofactor. Requires Mn(2+) as cofactor.

The protein localises to the cytoplasm. The enzyme catalyses (2R,3S)-3-isopropylmalate + NAD(+) = 4-methyl-2-oxopentanoate + CO2 + NADH. Its pathway is amino-acid biosynthesis; L-leucine biosynthesis; L-leucine from 3-methyl-2-oxobutanoate: step 3/4. Functionally, catalyzes the oxidation of 3-carboxy-2-hydroxy-4-methylpentanoate (3-isopropylmalate) to 3-carboxy-4-methyl-2-oxopentanoate. The product decarboxylates to 4-methyl-2 oxopentanoate. The chain is 3-isopropylmalate dehydrogenase from Geobacter sulfurreducens (strain ATCC 51573 / DSM 12127 / PCA).